An 88-amino-acid polypeptide reads, in one-letter code: MLAPVKKTEIISQFRTHDSDTGSPQVQIAILSERIGELTEHFKTHAKDHSSRRGLLKLVSKRRRLLDYLKLHDTDSYRDVIGKLGIRK.

It belongs to the universal ribosomal protein uS15 family. Part of the 30S ribosomal subunit. Forms a bridge to the 50S subunit in the 70S ribosome, contacting the 23S rRNA.

Functionally, one of the primary rRNA binding proteins, it binds directly to 16S rRNA where it helps nucleate assembly of the platform of the 30S subunit by binding and bridging several RNA helices of the 16S rRNA. Forms an intersubunit bridge (bridge B4) with the 23S rRNA of the 50S subunit in the ribosome. The sequence is that of Small ribosomal subunit protein uS15 from Acidobacterium capsulatum (strain ATCC 51196 / DSM 11244 / BCRC 80197 / JCM 7670 / NBRC 15755 / NCIMB 13165 / 161).